The sequence spans 417 residues: Diaminopimelate decarboxylase (417 aa).

K61 carries the post-translational modification N6-(pyridoxal phosphate)lysine. Pyridoxal 5'-phosphate-binding positions include G240 and 275–278; that span reads EPGR. 3 residues coordinate substrate: R278, R314, and Y318. Residue C344 is the Proton donor of the active site. Residues E345 and Y372 each coordinate substrate. A pyridoxal 5'-phosphate-binding site is contributed by Y372.

The protein belongs to the Orn/Lys/Arg decarboxylase class-II family. LysA subfamily. Homodimer. Pyridoxal 5'-phosphate serves as cofactor.

It catalyses the reaction meso-2,6-diaminopimelate + H(+) = L-lysine + CO2. The protein operates within amino-acid biosynthesis; L-lysine biosynthesis via DAP pathway; L-lysine from DL-2,6-diaminopimelate: step 1/1. Its function is as follows. Specifically catalyzes the decarboxylation of meso-diaminopimelate (meso-DAP) to L-lysine. The sequence is that of Diaminopimelate decarboxylase (lysA) from Vibrio cholerae serotype O1 (strain ATCC 39315 / El Tor Inaba N16961).